Reading from the N-terminus, the 254-residue chain is Thiazole synthase (254 aa).

The active-site Schiff-base intermediate with DXP is the K95. 1-deoxy-D-xylulose 5-phosphate contacts are provided by residues G156, 182–183 (AG), and 204–205 (NT).

It belongs to the ThiG family. Homotetramer. Forms heterodimers with either ThiH or ThiS.

The protein resides in the cytoplasm. It catalyses the reaction [ThiS sulfur-carrier protein]-C-terminal-Gly-aminoethanethioate + 2-iminoacetate + 1-deoxy-D-xylulose 5-phosphate = [ThiS sulfur-carrier protein]-C-terminal Gly-Gly + 2-[(2R,5Z)-2-carboxy-4-methylthiazol-5(2H)-ylidene]ethyl phosphate + 2 H2O + H(+). It functions in the pathway cofactor biosynthesis; thiamine diphosphate biosynthesis. In terms of biological role, catalyzes the rearrangement of 1-deoxy-D-xylulose 5-phosphate (DXP) to produce the thiazole phosphate moiety of thiamine. Sulfur is provided by the thiocarboxylate moiety of the carrier protein ThiS. In vitro, sulfur can be provided by H(2)S. The protein is Thiazole synthase of Shewanella putrefaciens (strain CN-32 / ATCC BAA-453).